Reading from the N-terminus, the 272-residue chain is Glutamate racemase (272 aa).

Substrate contacts are provided by residues 9 to 10 and 41 to 42; these read DS and YG. The active-site Proton donor/acceptor is Cys-73. 74–75 contacts substrate; sequence NT. Residue Cys-183 is the Proton donor/acceptor of the active site. Residue 184 to 185 coordinates substrate; that stretch reads TH.

It belongs to the aspartate/glutamate racemases family.

It catalyses the reaction L-glutamate = D-glutamate. Its pathway is cell wall biogenesis; peptidoglycan biosynthesis. In terms of biological role, provides the (R)-glutamate required for cell wall biosynthesis. The sequence is that of Glutamate racemase from Shewanella sp. (strain MR-7).